We begin with the raw amino-acid sequence, 520 residues long: MKPKKLGIIGGSLLAFGILICAIAFPPFLRSQVKKQIALKDGSEMRELWSNFPVPLDFKIYLFNVTNPMEITAGEKPILEEVGPFFYDEYKQKVDLVDREEDDSLEYNLKATWFFNPSRSEGLTGEEELIVPHVLILSMIKLTLEQQPAAMGILNKAVDNIFKKPESVFVRAKAREILFDGLPVDCTGKDFASSAICSVLKEKDDALIADGPGRYLFSLFGPKNGTVLPERIRVLRGIKNYKDVGKVTEVNGKTKLDIWGEGDCNEFNGTDSTIFAPLLTEQDDIVSFAPDICRSMGARFDSYTKVKGINTYHYKADLGDMSSHPEEKCFCPSPDSCLTKNLMDLTKCVGAPLIASLPHLLGAEEKYLKMVDGLHPNEEEHGIAMDFEPMTATPLSAHKRLQFNLYLHKVAKFKLMKNFPECLFPIFWVEEGILLGDEFVKKLKTVFKTISIVGFMKWFTIVSGTCVSGAAAALFFKNKDKNKLDITKVTPQKGEEKKWPNQMTISTIQSAAVPPNLDAD.

Over 1-5 the chain is Cytoplasmic; it reads MKPKK. Residues 6–26 form a helical membrane-spanning segment; the sequence is LGIIGGSLLAFGILICAIAFP. Over 27 to 451 the chain is Extracellular; it reads PFLRSQVKKQ…KLKTVFKTIS (425 aa). N-linked (GlcNAc...) asparagine glycosylation is found at Asn64, Asn224, and Asn268. 3 disulfide bridges follow: Cys264–Cys329, Cys293–Cys348, and Cys331–Cys337. Residues 452 to 472 form a helical membrane-spanning segment; that stretch reads IVGFMKWFTIVSGTCVSGAAA. Over 473 to 520 the chain is Cytoplasmic; the sequence is ALFFKNKDKNKLDITKVTPQKGEEKKWPNQMTISTIQSAAVPPNLDAD.

Belongs to the CD36 family.

Its subcellular location is the cell membrane. In terms of biological role, plays an olfactory role that is not restricted to pheromone sensitivity. The protein is Sensory neuron membrane protein 1 of Apis mellifera (Honeybee).